Reading from the N-terminus, the 331-residue chain is Phosphate acyltransferase (331 aa).

This sequence belongs to the PlsX family. In terms of assembly, homodimer. Probably interacts with PlsY.

The protein localises to the cytoplasm. The catalysed reaction is a fatty acyl-[ACP] + phosphate = an acyl phosphate + holo-[ACP]. It participates in lipid metabolism; phospholipid metabolism. Functionally, catalyzes the reversible formation of acyl-phosphate (acyl-PO(4)) from acyl-[acyl-carrier-protein] (acyl-ACP). This enzyme utilizes acyl-ACP as fatty acyl donor, but not acyl-CoA. This chain is Phosphate acyltransferase, found in Mesoplasma florum (strain ATCC 33453 / NBRC 100688 / NCTC 11704 / L1) (Acholeplasma florum).